The following is a 317-amino-acid chain: Probable arabinan endo-1,5-alpha-L-arabinosidase C (317 aa).

An N-terminal signal peptide occupies residues 1 to 17 (MLSFLAALSLPLALVNA). Asp32 acts as the Proton acceptor in catalysis. An N-linked (GlcNAc...) asparagine glycan is attached at Asn190. Glu198 acts as the Proton donor in catalysis.

It belongs to the glycosyl hydrolase 43 family.

It is found in the secreted. It catalyses the reaction Endohydrolysis of (1-&gt;5)-alpha-arabinofuranosidic linkages in (1-&gt;5)-arabinans.. It participates in glycan metabolism; L-arabinan degradation. In terms of biological role, endo-1,5-alpha-L-arabinanase involved in degradation of pectin. Its preferred substrate is linear 1,5-alpha-L-arabinan. This is Probable arabinan endo-1,5-alpha-L-arabinosidase C (abnC) from Aspergillus flavus (strain ATCC 200026 / FGSC A1120 / IAM 13836 / NRRL 3357 / JCM 12722 / SRRC 167).